We begin with the raw amino-acid sequence, 556 residues long: MKTDIEIAQEAKMIHIREVAKSLGITEDDLDFYGKYKAKFTDELWDEIKDREDGKLILVTAINPTPAGEGKTTTTVGLGQAFGKLEKNAVIALREPSLGPCFGIKGGAAGGGYAQVVPMEDLNLHFTGDFHAITSANNLLAAMLDNHIQQGNTLGIDTNQIVWKRCVDMNDRVLRNIVVGLGRKADGVVREDHFIITVASEIMAILCLASDMNDLKERLSRIIVAYSYEGKPITAKDLHAVGSMAALLKDAIRPNLIQTLENTPAIIHGGPFANIAHGCNSVRATKTALKLADYVITEAGFGADLGAEKFLDIKCRIADLKPAAVVLVATIRALKYNGGVAKTDLSSENLEALEKGIVNLEKHIENIQKFGVPVVVTLNKFSTDTERELSYVKQFCEQRGCEFSLSEVWEKGGEGGIDLANKVIKTIETKESNYHVLYPNEMSLKEKMGTIAKEIYGADGVTFDSGALKEVERLTELGFGNLPVCMAKNQYSLSDDPSKLGRPTNFTVNIREVYVSAGAGFVVAITGTVMTMPGLPKVPAAEHIDVNEEGVITGLF.

ATP is bound at residue 65-72; sequence TPAGEGKT.

Belongs to the formate--tetrahydrofolate ligase family.

It carries out the reaction (6S)-5,6,7,8-tetrahydrofolate + formate + ATP = (6R)-10-formyltetrahydrofolate + ADP + phosphate. It functions in the pathway one-carbon metabolism; tetrahydrofolate interconversion. The chain is Formate--tetrahydrofolate ligase from Lachnoclostridium phytofermentans (strain ATCC 700394 / DSM 18823 / ISDg) (Clostridium phytofermentans).